A 156-amino-acid polypeptide reads, in one-letter code: Small ribosomal subunit protein uS7 (156 aa).

This sequence belongs to the universal ribosomal protein uS7 family. In terms of assembly, part of the 30S ribosomal subunit. Contacts proteins S9 and S11.

One of the primary rRNA binding proteins, it binds directly to 16S rRNA where it nucleates assembly of the head domain of the 30S subunit. Is located at the subunit interface close to the decoding center, probably blocks exit of the E-site tRNA. This chain is Small ribosomal subunit protein uS7, found in Synechococcus sp. (strain WH7803).